The following is a 462-amino-acid chain: Cysteine--tRNA ligase (462 aa).

Cys-29 lines the Zn(2+) pocket. A 'HIGH' region motif is present at residues 31–41 (PTVYDHAHIGN). Zn(2+)-binding residues include Cys-214, His-239, and Glu-243. The 'KMSKS' region signature appears at 272–276 (KMSKS). ATP is bound at residue Lys-275.

This sequence belongs to the class-I aminoacyl-tRNA synthetase family. In terms of assembly, monomer. Zn(2+) is required as a cofactor.

It is found in the cytoplasm. It catalyses the reaction tRNA(Cys) + L-cysteine + ATP = L-cysteinyl-tRNA(Cys) + AMP + diphosphate. The protein is Cysteine--tRNA ligase of Xanthobacter autotrophicus (strain ATCC BAA-1158 / Py2).